The following is a 364-amino-acid chain: D-alanine--D-alanine ligase (364 aa).

Residues 134 to 344 (KVLLKSFNIP…YESLVDKLIT (211 aa)) enclose the ATP-grasp domain. Residue 167–222 (NNKLNYPVIVKPSVLGSSIGINVAYNVSQIEKYIEEAFEYDLTVVVEKFIKAREIE) participates in ATP binding. Mg(2+)-binding residues include aspartate 297, glutamate 311, and asparagine 313.

The protein belongs to the D-alanine--D-alanine ligase family. Mg(2+) is required as a cofactor. Requires Mn(2+) as cofactor.

The protein localises to the cytoplasm. The catalysed reaction is 2 D-alanine + ATP = D-alanyl-D-alanine + ADP + phosphate + H(+). It functions in the pathway cell wall biogenesis; peptidoglycan biosynthesis. In terms of biological role, cell wall formation. This Borrelia recurrentis (strain A1) protein is D-alanine--D-alanine ligase.